We begin with the raw amino-acid sequence, 564 residues long: Potassium-transporting ATPase potassium-binding subunit (564 aa).

Helical transmembrane passes span 4-24 (HEIL…PFLG), 67-87 (TLAL…ILML), 135-155 (VGLT…LVAL), 179-199 (LYVL…QGVP), 258-278 (FEVA…GHYV), 286-306 (AILG…LWAE), 376-396 (IFGG…IAVF), 420-440 (LLVF…AIAA), 487-507 (LMIG…ILAI), and 528-548 (GPLF…LTFL).

It belongs to the KdpA family. The system is composed of three essential subunits: KdpA, KdpB and KdpC.

The protein localises to the cell inner membrane. Part of the high-affinity ATP-driven potassium transport (or Kdp) system, which catalyzes the hydrolysis of ATP coupled with the electrogenic transport of potassium into the cytoplasm. This subunit binds the periplasmic potassium ions and delivers the ions to the membrane domain of KdpB through an intramembrane tunnel. This chain is Potassium-transporting ATPase potassium-binding subunit, found in Pseudomonas aeruginosa (strain ATCC 15692 / DSM 22644 / CIP 104116 / JCM 14847 / LMG 12228 / 1C / PRS 101 / PAO1).